The chain runs to 127 residues: Aspartate 1-decarboxylase (127 aa).

Catalysis depends on S25, which acts as the Schiff-base intermediate with substrate; via pyruvic acid. Pyruvic acid (Ser) is present on S25. T57 provides a ligand contact to substrate. Y58 acts as the Proton donor in catalysis. Position 73 to 75 (73 to 75) interacts with substrate; the sequence is GAA.

It belongs to the PanD family. In terms of assembly, heterooctamer of four alpha and four beta subunits. It depends on pyruvate as a cofactor. Is synthesized initially as an inactive proenzyme, which is activated by self-cleavage at a specific serine bond to produce a beta-subunit with a hydroxyl group at its C-terminus and an alpha-subunit with a pyruvoyl group at its N-terminus.

It localises to the cytoplasm. It carries out the reaction L-aspartate + H(+) = beta-alanine + CO2. The protein operates within cofactor biosynthesis; (R)-pantothenate biosynthesis; beta-alanine from L-aspartate: step 1/1. Catalyzes the pyruvoyl-dependent decarboxylation of aspartate to produce beta-alanine. The sequence is that of Aspartate 1-decarboxylase from Clostridium botulinum (strain Loch Maree / Type A3).